The chain runs to 207 residues: UPF0319 protein VV1_2115 (207 aa).

The first 18 residues, 1–18, serve as a signal peptide directing secretion; sequence MLRVLGLAGMLMSFNIHA.

It belongs to the UPF0319 family.

This chain is UPF0319 protein VV1_2115, found in Vibrio vulnificus (strain CMCP6).